A 390-amino-acid polypeptide reads, in one-letter code: METFLFTSESVNEGHPDKLCDQVSDAILDACLEQDPESKVACETCTKTNMVMVFGEITTKATVDYEKIVRDTCRGIGFTSADVGLDADNCKVLVNIEQQSPDIAQGVHGHLTKKPEEIGAGDQGHMFGYATDETPELMPLTHVWATKLGAKLTEVRKNKTCPWLRPDGKTQVTVEYKNDNGAMVPIRVHTVLISTQHDETVTNDQIAQDLKEHVIKPVIPSQYLDENTIFHLNPSGRFVIGGPHGDAGLTGRKIIIDTYGGWGAHGGGAFSGKDPTKVDRSGAYIVRQAAKSVVASGLARRCIVQVSYAIGVAEPLSVFVDTYKTGTIPDKDILTLIKENFDFRPGMMSINLDLLRGGNFRYQKTAAYGHFGRDDPDFSWETVKVLKPKA.

Glutamate 9 serves as a coordination point for Mg(2+). Histidine 15 is a binding site for ATP. Residue glutamate 43 coordinates K(+). The L-methionine site is built by glutamate 56 and glutamine 99. ATP-binding positions include 167–169 (DGK), 235–238 (SGRF), aspartate 246, 252–253 (RK), alanine 269, lysine 273, and lysine 277. L-methionine is bound at residue aspartate 246. Lysine 277 serves as a coordination point for L-methionine.

The protein belongs to the AdoMet synthase family. In terms of assembly, homotetramer. Requires Mn(2+) as cofactor. It depends on Mg(2+) as a cofactor. The cofactor is Co(2+). K(+) is required as a cofactor.

It is found in the cytoplasm. It catalyses the reaction L-methionine + ATP + H2O = S-adenosyl-L-methionine + phosphate + diphosphate. The protein operates within amino-acid biosynthesis; S-adenosyl-L-methionine biosynthesis; S-adenosyl-L-methionine from L-methionine: step 1/1. Catalyzes the formation of S-adenosylmethionine from methionine and ATP. The reaction comprises two steps that are both catalyzed by the same enzyme: formation of S-adenosylmethionine (AdoMet) and triphosphate, and subsequent hydrolysis of the triphosphate. The polypeptide is S-adenosylmethionine synthase 1 (SAMS1) (Nicotiana tabacum (Common tobacco)).